A 158-amino-acid chain; its full sequence is Crossover junction endodeoxyribonuclease RuvC (158 aa).

Catalysis depends on residues D7, E66, and D139. The Mg(2+) site is built by D7, E66, and D139.

The protein belongs to the RuvC family. Homodimer which binds Holliday junction (HJ) DNA. The HJ becomes 2-fold symmetrical on binding to RuvC with unstacked arms; it has a different conformation from HJ DNA in complex with RuvA. In the full resolvosome a probable DNA-RuvA(4)-RuvB(12)-RuvC(2) complex forms which resolves the HJ. The cofactor is Mg(2+).

Its subcellular location is the cytoplasm. The catalysed reaction is Endonucleolytic cleavage at a junction such as a reciprocal single-stranded crossover between two homologous DNA duplexes (Holliday junction).. Its function is as follows. The RuvA-RuvB-RuvC complex processes Holliday junction (HJ) DNA during genetic recombination and DNA repair. Endonuclease that resolves HJ intermediates. Cleaves cruciform DNA by making single-stranded nicks across the HJ at symmetrical positions within the homologous arms, yielding a 5'-phosphate and a 3'-hydroxyl group; requires a central core of homology in the junction. The consensus cleavage sequence is 5'-(A/T)TT(C/G)-3'. Cleavage occurs on the 3'-side of the TT dinucleotide at the point of strand exchange. HJ branch migration catalyzed by RuvA-RuvB allows RuvC to scan DNA until it finds its consensus sequence, where it cleaves and resolves the cruciform DNA. The protein is Crossover junction endodeoxyribonuclease RuvC of Campylobacter jejuni subsp. jejuni serotype O:6 (strain 81116 / NCTC 11828).